The primary structure comprises 182 residues: Large ribosomal subunit protein uL16 (182 aa).

Residues 140–182 (EKPTQVGKAPPKSSFLPSDETETAAAQAGTEASSASSVTPLES) are disordered. A compositionally biased stretch (low complexity) spans 162–176 (TAAAQAGTEASSASS).

It belongs to the universal ribosomal protein uL16 family. Part of the 50S ribosomal subunit.

Functionally, binds 23S rRNA and is also seen to make contacts with the A and possibly P site tRNAs. The protein is Large ribosomal subunit protein uL16 of Prochlorococcus marinus (strain SARG / CCMP1375 / SS120).